The primary structure comprises 297 residues: Aspartate carbamoyltransferase catalytic subunit (297 aa).

R49 and T50 together coordinate carbamoyl phosphate. Position 77 (K77) interacts with L-aspartate. Positions 99, 129, and 132 each coordinate carbamoyl phosphate. L-aspartate is bound by residues R162 and R215. Residues G256 and P257 each contribute to the carbamoyl phosphate site.

It belongs to the aspartate/ornithine carbamoyltransferase superfamily. ATCase family. As to quaternary structure, heterododecamer (2C3:3R2) of six catalytic PyrB chains organized as two trimers (C3), and six regulatory PyrI chains organized as three dimers (R2).

The catalysed reaction is carbamoyl phosphate + L-aspartate = N-carbamoyl-L-aspartate + phosphate + H(+). It functions in the pathway pyrimidine metabolism; UMP biosynthesis via de novo pathway; (S)-dihydroorotate from bicarbonate: step 2/3. In terms of biological role, catalyzes the condensation of carbamoyl phosphate and aspartate to form carbamoyl aspartate and inorganic phosphate, the committed step in the de novo pyrimidine nucleotide biosynthesis pathway. The chain is Aspartate carbamoyltransferase catalytic subunit from Legionella pneumophila subsp. pneumophila (strain Philadelphia 1 / ATCC 33152 / DSM 7513).